The sequence spans 334 residues: Replication factor C small subunit (334 aa).

49 to 56 contacts ATP; the sequence is GPPGVGKT.

Belongs to the activator 1 small subunits family. RfcS subfamily. Heteromultimer composed of small subunits (RfcS) and large subunits (RfcL).

Part of the RFC clamp loader complex which loads the PCNA sliding clamp onto DNA. In Methanosarcina barkeri (strain Fusaro / DSM 804), this protein is Replication factor C small subunit.